Reading from the N-terminus, the 152-residue chain is Superoxide dismutase [Cu-Zn] 1 (152 aa).

Positions 45, 47, and 62 each coordinate Cu cation. Cys-56 and Cys-145 form a disulfide bridge. Residues His-62, His-70, His-79, and Asp-82 each coordinate Zn(2+). Residue His-119 participates in Cu cation binding.

It belongs to the Cu-Zn superoxide dismutase family. As to quaternary structure, homodimer. Requires Cu cation as cofactor. The cofactor is Zn(2+).

The protein resides in the cytoplasm. The enzyme catalyses 2 superoxide + 2 H(+) = H2O2 + O2. Its function is as follows. Destroys radicals which are normally produced within the cells and which are toxic to biological systems. The sequence is that of Superoxide dismutase [Cu-Zn] 1 (SODCC.1) from Solanum lycopersicum (Tomato).